The sequence spans 86 residues: uncharacterized protein (86 aa).

Residues 12 to 32 form a helical membrane-spanning segment; that stretch reads IIFIFAIIIIVVLCVITYLYL.

The protein resides in the membrane. This is an uncharacterized protein from Escherichia coli (strain K12).